The chain runs to 102 residues: Small ubiquitin-related modifier 1 (102 aa).

The 78-residue stretch at 21 to 98 (DYIKLKVIGQ…IEVYQEQTGG (78 aa)) folds into the Ubiquitin-like domain. G98 participates in a covalent cross-link: Glycyl lysine isopeptide (Gly-Lys) (interchain with K-? in acceptor proteins). A propeptide spanning residues 99–102 (HSTI) is cleaved from the precursor.

This sequence belongs to the ubiquitin family. SUMO subfamily. As to quaternary structure, interacts with sae2, ube2i, ranbp2, pias1 and pias2. Interacts with sox9 and sox10. Covalently attached to a number of proteins. Post-translationally, cleavage of precursor form by a sentrin-specific protease is necessary for function.

Its subcellular location is the nucleus membrane. It localises to the nucleus speckle. It is found in the cytoplasm. The protein localises to the nucleus. The protein resides in the PML body. Its subcellular location is the cell membrane. Ubiquitin-like protein that can be covalently attached to proteins as a monomer or a lysine-linked polymer. Covalent attachment via an isopeptide bond to its substrates requires prior activation by the E1 complex sae1-sae2 and linkage to the E2 enzyme ube2i. This post-translational modification on lysine residues of proteins plays a crucial role in a number of cellular processes such as nuclear transport, DNA replication and repair, mitosis and signal transduction. Polymeric sumo1 chains are also susceptible to polyubiquitination which functions as a signal for proteasomal degradation of modified proteins. In Xenopus tropicalis (Western clawed frog), this protein is Small ubiquitin-related modifier 1 (sumo1).